The following is a 906-amino-acid chain: Eukaryotic translation initiation factor 3 subunit C (906 aa).

A disordered region spans residues 1-22 (MSRFFANGSDSESESSEEEVQA). A compositionally biased stretch (acidic residues) spans 11-20 (SESESSEEEV). A phosphoserine mark is found at Ser-34, Ser-165, Ser-176, and Ser-185. The segment at 158–283 (REAPDQESEA…KRPEDDEDGE (126 aa)) is disordered. A compositionally biased stretch (acidic residues) spans 162 to 186 (DQESEAEDEEAAQDSDGGDAGDDSD). A compositionally biased stretch (low complexity) spans 195 to 209 (EAAPKVAKTVPAKAA). Residues 211-237 (ADDDDSDDSIDWDSDSETETESSDDEN) show a composition bias toward acidic residues. A compositionally biased stretch (basic and acidic residues) spans 242–270 (MRERFLKRTTEKEEKDDDKRKDKRKEQKI). A PCI domain is found at 641–817 (FHMHINLELL…ETVVMHRSEP (177 aa)). 2 disordered regions span residues 853–873 (GNMG…NWGG) and 887–906 (QRGR…IDEE). The span at 894–906 (QQQQQQVQTIDEE) shows a compositional bias: low complexity.

Belongs to the eIF-3 subunit C family. Component of the eukaryotic translation initiation factor 3 (eIF-3) complex. The eIF-3 complex interacts with pix.

The protein resides in the cytoplasm. In terms of biological role, component of the eukaryotic translation initiation factor 3 (eIF-3) complex, which is involved in protein synthesis of a specialized repertoire of mRNAs and, together with other initiation factors, stimulates binding of mRNA and methionyl-tRNAi to the 40S ribosome. The eIF-3 complex specifically targets and initiates translation of a subset of mRNAs involved in cell proliferation. In Drosophila ananassae (Fruit fly), this protein is Eukaryotic translation initiation factor 3 subunit C.